Consider the following 151-residue polypeptide: Endoribonuclease YbeY (151 aa).

Residues His114, His118, and His124 each coordinate Zn(2+).

Belongs to the endoribonuclease YbeY family. Zn(2+) is required as a cofactor.

It is found in the cytoplasm. Functionally, single strand-specific metallo-endoribonuclease involved in late-stage 70S ribosome quality control and in maturation of the 3' terminus of the 16S rRNA. The protein is Endoribonuclease YbeY of Hamiltonella defensa subsp. Acyrthosiphon pisum (strain 5AT).